Here is a 371-residue protein sequence, read N- to C-terminus: RT1 class I histocompatibility antigen, AA alpha chain (371 aa).

An N-terminal signal peptide occupies residues 1–24 (MEAMAPRTLLLLLAAALAPTQTRA). The tract at residues 25-114 (GSHSLRYFYT…LRGYYNQSEG (90 aa)) is alpha-1. Topologically, residues 25–311 (GSHSLRYFYT…PSTDSNMETT (287 aa)) are extracellular. N-linked (GlcNAc...) asparagine glycosylation occurs at N110. The segment at 115-206 (GSHTIQEMYG…ELGKETLLRS (92 aa)) is alpha-2. Positions 207–298 (DPPEAHVTLH…GLPKPLSQRW (92 aa)) are alpha-3. The 87-residue stretch at 209-295 (PEAHVTLHPR…EHEGLPKPLS (87 aa)) folds into the Ig-like C1-type domain. N280 is a glycosylation site (N-linked (GlcNAc...) asparagine). Residues 299-311 (EPSPSTDSNMETT) form a connecting peptide region. A helical membrane pass occupies residues 312–336 (VIYVILGAVAMIGAVAIIGAMVAVV). The Cytoplasmic portion of the chain corresponds to 337–371 (RRRKRNTGGKGGDYAPAPGRDSSQSSDVSLPDCKA). Residues 342–371 (NTGGKGGDYAPAPGRDSSQSSDVSLPDCKA) are disordered. Phosphoserine occurs at positions 362 and 365.

It belongs to the MHC class I family. As to quaternary structure, heterodimer of an alpha chain and a beta chain (beta-2-microglobulin).

It is found in the membrane. In terms of biological role, involved in the presentation of foreign antigens to the immune system. This Rattus norvegicus (Rat) protein is RT1 class I histocompatibility antigen, AA alpha chain.